We begin with the raw amino-acid sequence, 688 residues long: Glycine--tRNA ligase beta subunit (688 aa).

This sequence belongs to the class-II aminoacyl-tRNA synthetase family. As to quaternary structure, tetramer of two alpha and two beta subunits.

The protein resides in the cytoplasm. It carries out the reaction tRNA(Gly) + glycine + ATP = glycyl-tRNA(Gly) + AMP + diphosphate. This Haemophilus influenzae (strain ATCC 51907 / DSM 11121 / KW20 / Rd) protein is Glycine--tRNA ligase beta subunit (glyS).